Reading from the N-terminus, the 177-residue chain is Peptide methionine sulfoxide reductase MsrA (177 aa).

C15 is an active-site residue.

The protein belongs to the MsrA Met sulfoxide reductase family.

The catalysed reaction is L-methionyl-[protein] + [thioredoxin]-disulfide + H2O = L-methionyl-(S)-S-oxide-[protein] + [thioredoxin]-dithiol. It carries out the reaction [thioredoxin]-disulfide + L-methionine + H2O = L-methionine (S)-S-oxide + [thioredoxin]-dithiol. Has an important function as a repair enzyme for proteins that have been inactivated by oxidation. Catalyzes the reversible oxidation-reduction of methionine sulfoxide in proteins to methionine. The polypeptide is Peptide methionine sulfoxide reductase MsrA (Listeria monocytogenes serotype 4a (strain HCC23)).